Here is a 284-residue protein sequence, read N- to C-terminus: 2-dehydro-3-deoxyphosphooctonate aldolase (284 aa).

Belongs to the KdsA family.

Its subcellular location is the cytoplasm. It carries out the reaction D-arabinose 5-phosphate + phosphoenolpyruvate + H2O = 3-deoxy-alpha-D-manno-2-octulosonate-8-phosphate + phosphate. It functions in the pathway carbohydrate biosynthesis; 3-deoxy-D-manno-octulosonate biosynthesis; 3-deoxy-D-manno-octulosonate from D-ribulose 5-phosphate: step 2/3. It participates in bacterial outer membrane biogenesis; lipopolysaccharide biosynthesis. This chain is 2-dehydro-3-deoxyphosphooctonate aldolase, found in Haemophilus influenzae (strain PittEE).